Consider the following 273-residue polypeptide: Large ribosomal subunit protein uL2 (273 aa).

The segment at 223-273 is disordered; the sequence is VVMNPVDHPMGGGEGRSSGGRHPCTPWGVPTKGHKTRSNKSTDKYIVKRRG. The segment covering 262–273 has biased composition (basic and acidic residues); the sequence is KSTDKYIVKRRG.

The protein belongs to the universal ribosomal protein uL2 family. Part of the 50S ribosomal subunit. Forms a bridge to the 30S subunit in the 70S ribosome.

One of the primary rRNA binding proteins. Required for association of the 30S and 50S subunits to form the 70S ribosome, for tRNA binding and peptide bond formation. It has been suggested to have peptidyltransferase activity; this is somewhat controversial. Makes several contacts with the 16S rRNA in the 70S ribosome. This Syntrophus aciditrophicus (strain SB) protein is Large ribosomal subunit protein uL2.